Reading from the N-terminus, the 252-residue chain is Phosphate import ATP-binding protein PstB 2 (252 aa).

Residues 6–247 (ISINDLSVYF…PQHKETEDYI (242 aa)) form the ABC transporter domain. Residue 38 to 45 (GPSGSGKS) coordinates ATP.

Belongs to the ABC transporter superfamily. Phosphate importer (TC 3.A.1.7) family. As to quaternary structure, the complex is composed of two ATP-binding proteins (PstB), two transmembrane proteins (PstC and PstA) and a solute-binding protein (PstS).

It localises to the cell membrane. The enzyme catalyses phosphate(out) + ATP + H2O = ADP + 2 phosphate(in) + H(+). Its function is as follows. Part of the ABC transporter complex PstSACB involved in phosphate import. Responsible for energy coupling to the transport system. The protein is Phosphate import ATP-binding protein PstB 2 of Streptococcus thermophilus (strain CNRZ 1066).